The following is a 206-amino-acid chain: Protein GrpE (206 aa).

Over residues 1–15 (MTDSNGQKDNNQDQA) the composition is skewed to polar residues. The interval 1-38 (MTDSNGQKDNNQDQAQPADPVVSKPYIMPDDPEEGTNE) is disordered.

The protein belongs to the GrpE family. Homodimer.

The protein localises to the cytoplasm. In terms of biological role, participates actively in the response to hyperosmotic and heat shock by preventing the aggregation of stress-denatured proteins, in association with DnaK and GrpE. It is the nucleotide exchange factor for DnaK and may function as a thermosensor. Unfolded proteins bind initially to DnaJ; upon interaction with the DnaJ-bound protein, DnaK hydrolyzes its bound ATP, resulting in the formation of a stable complex. GrpE releases ADP from DnaK; ATP binding to DnaK triggers the release of the substrate protein, thus completing the reaction cycle. Several rounds of ATP-dependent interactions between DnaJ, DnaK and GrpE are required for fully efficient folding. This Rhodopseudomonas palustris (strain BisB5) protein is Protein GrpE.